A 27-amino-acid chain; its full sequence is uncharacterized protein (27 aa).

It is found in the plastid. The protein resides in the chloroplast. This is an uncharacterized protein from Marchantia polymorpha (Common liverwort).